We begin with the raw amino-acid sequence, 1222 residues long: ATP-dependent helicase/nuclease subunit A (1222 aa).

In terms of domain architecture, UvrD-like helicase ATP-binding spans 39–495; the sequence is QKRTAQQIEA…ILLKENFRSQ (457 aa). Position 60–67 (60–67) interacts with ATP; sequence ASAGSGKT. The UvrD-like helicase C-terminal domain maps to 524-810; that stretch reads QLIAGSHAQT…NLMTIHKSKG (287 aa).

Belongs to the helicase family. AddA subfamily. As to quaternary structure, heterodimer of AddA and AddB/RexB. Mg(2+) is required as a cofactor.

The enzyme catalyses Couples ATP hydrolysis with the unwinding of duplex DNA by translocating in the 3'-5' direction.. It carries out the reaction ATP + H2O = ADP + phosphate + H(+). The heterodimer acts as both an ATP-dependent DNA helicase and an ATP-dependent, dual-direction single-stranded exonuclease. Recognizes the chi site generating a DNA molecule suitable for the initiation of homologous recombination. The AddA nuclease domain is required for chi fragment generation; this subunit has the helicase and 3' -&gt; 5' nuclease activities. This Streptococcus pyogenes serotype M12 (strain MGAS2096) protein is ATP-dependent helicase/nuclease subunit A.